The sequence spans 175 residues: Adenine phosphoribosyltransferase (175 aa).

It belongs to the purine/pyrimidine phosphoribosyltransferase family. In terms of assembly, homodimer.

It localises to the cytoplasm. The enzyme catalyses AMP + diphosphate = 5-phospho-alpha-D-ribose 1-diphosphate + adenine. It functions in the pathway purine metabolism; AMP biosynthesis via salvage pathway; AMP from adenine: step 1/1. Its function is as follows. Catalyzes a salvage reaction resulting in the formation of AMP, that is energically less costly than de novo synthesis. This Caldicellulosiruptor saccharolyticus (strain ATCC 43494 / DSM 8903 / Tp8T 6331) protein is Adenine phosphoribosyltransferase.